Consider the following 425-residue polypeptide: MSATLRLTEQLISRPSVTPLDEGCIDLLSARLGALGFVCERMDSGPDSFRVVNLWAKREGFNPLAQENRGQSATKSAANEGEAHTTPIKTLVFAGHTDVVPTGPLEQWHSHPFTPSHRNGVLYGRGAADMKTSIAAMVVAVEEFLAAHPQPGLSIAFLLTSDEEGPATDGTVVVCKQLKARGEVLDYCIVGEPTSVSHLGDMIKNGRRGTMSGKLTIKGVQGHIAYPHLARNPVHLFAPALAQLVATEWDQGNAFFPATSWQVSNMHGGTGASNVIPGELVVDFNFRFCTESTPENLQQRLQAILDQHELDYDLKWTVGGLPFLTTPGELVNAVRGAIHAETGLDTELSTTGGTSDGRFIAKVCPQVIEFGPLNATIHKINECVDVSSLDPLKNIYKGVLERLAGISGMAGASGLAAVADSTSSP.

Histidine 96 serves as a coordination point for Zn(2+). Aspartate 98 is a catalytic residue. Residue aspartate 129 participates in Zn(2+) binding. Glutamate 163 acts as the Proton acceptor in catalysis. Zn(2+) is bound by residues glutamate 164, glutamate 192, and histidine 378.

This sequence belongs to the peptidase M20A family. DapE subfamily. As to quaternary structure, homodimer. Zn(2+) serves as cofactor. It depends on Co(2+) as a cofactor.

It carries out the reaction N-succinyl-(2S,6S)-2,6-diaminopimelate + H2O = (2S,6S)-2,6-diaminopimelate + succinate. It functions in the pathway amino-acid biosynthesis; L-lysine biosynthesis via DAP pathway; LL-2,6-diaminopimelate from (S)-tetrahydrodipicolinate (succinylase route): step 3/3. In terms of biological role, catalyzes the hydrolysis of N-succinyl-L,L-diaminopimelic acid (SDAP), forming succinate and LL-2,6-diaminopimelate (DAP), an intermediate involved in the bacterial biosynthesis of lysine and meso-diaminopimelic acid, an essential component of bacterial cell walls. The protein is Succinyl-diaminopimelate desuccinylase of Polaromonas sp. (strain JS666 / ATCC BAA-500).